Here is a 225-residue protein sequence, read N- to C-terminus: MSFAEEVNREEWMEKIGKLRFQRAEMNRLIMDYLVTEGYKEAAEKFRIESGTQPTAPLDSLDDRIKIREAVQKGDLEQAVSMTNKLNPDILDSNQQLYFHLQQQRLIELIREKDIEAAVEFAQGQFSEQGQESGRYLEELEQTMALLAFDNPEESPFGDLLHTSQRQKVASELNAAILEAEHKKTQPKLANVLKLLLWAQDELEGKKVKFPKMAEIASGTFEESR.

The LisH domain occupies 22–54; sequence QRAEMNRLIMDYLVTEGYKEAAEKFRIESGTQP. The CTLH domain maps to 60–117; it reads SLDDRIKIREAVQKGDLEQAVSMTNKLNPDILDSNQQLYFHLQQQRLIELIREKDIEA.

It belongs to the GID8 family.

It localises to the cytoplasm. The protein resides in the nucleus. Functionally, core component of the CTLH E3 ubiquitin-protein ligase complex that mediates ubiquitination and subsequent proteasomal degradation of target proteins. Acts as a positive regulator of Wnt signaling pathway by promoting beta-catenin (CTNNB1) nuclear accumulation. In Nematostella vectensis (Starlet sea anemone), this protein is Glucose-induced degradation protein 8 homolog.